Reading from the N-terminus, the 116-residue chain is Non-specific lipid-transfer protein 10 (116 aa).

The signal sequence occupies residues 1–22 (MMRVVLPLCLLLASIFAWGSEA). 4 cysteine pairs are disulfide-bonded: cysteine 26-cysteine 73, cysteine 36-cysteine 50, cysteine 51-cysteine 98, and cysteine 71-cysteine 112.

This sequence belongs to the plant LTP family.

Its function is as follows. Plant non-specific lipid-transfer proteins transfer phospholipids as well as galactolipids across membranes. May play a role in wax or cutin deposition in the cell walls of expanding epidermal cells and certain secretory tissues. The chain is Non-specific lipid-transfer protein 10 (LTP10) from Arabidopsis thaliana (Mouse-ear cress).